A 236-amino-acid polypeptide reads, in one-letter code: tRNA (guanine-N(7)-)-methyltransferase (236 aa).

Residues 1-17 show a composition bias toward basic and acidic residues; it reads MSERKSDPDRDDSERAF. The disordered stretch occupies residues 1-23; that stretch reads MSERKSDPDRDDSERAFFGRRKG. S-adenosyl-L-methionine-binding residues include Glu67, Glu92, Asp119, and Asp141. Asp141 is an active-site residue. The substrate site is built by Lys145 and Asp177.

It belongs to the class I-like SAM-binding methyltransferase superfamily. TrmB family.

It catalyses the reaction guanosine(46) in tRNA + S-adenosyl-L-methionine = N(7)-methylguanosine(46) in tRNA + S-adenosyl-L-homocysteine. The protein operates within tRNA modification; N(7)-methylguanine-tRNA biosynthesis. In terms of biological role, catalyzes the formation of N(7)-methylguanine at position 46 (m7G46) in tRNA. This is tRNA (guanine-N(7)-)-methyltransferase from Bradyrhizobium diazoefficiens (strain JCM 10833 / BCRC 13528 / IAM 13628 / NBRC 14792 / USDA 110).